Here is a 122-residue protein sequence, read N- to C-terminus: Sperm-egg fusion protein LLCFC1 (122 aa).

An N-terminal signal peptide occupies residues 1–28 (MPPLAPQLCRAVFLVPILLLLQVKPLNG). Residues 27–51 (NGSPGPKDGSQTEKTPSADQNQEQF) are disordered. Residues 38–49 (TEKTPSADQNQE) are compositionally biased toward polar residues.

It localises to the secreted. Sperm protein required for fusion of sperm with the egg membrane during fertilization. The protein is Sperm-egg fusion protein LLCFC1 of Homo sapiens (Human).